The sequence spans 241 residues: Proteasome subunit alpha (241 aa).

It belongs to the peptidase T1A family. In terms of assembly, the 20S proteasome core is composed of 14 alpha and 14 beta subunits that assemble into four stacked heptameric rings, resulting in a barrel-shaped structure. The two inner rings, each composed of seven catalytic beta subunits, are sandwiched by two outer rings, each composed of seven alpha subunits. The catalytic chamber with the active sites is on the inside of the barrel. Has a gated structure, the ends of the cylinder being occluded by the N-termini of the alpha-subunits. Is capped at one or both ends by the proteasome regulatory ATPase, PAN.

Its subcellular location is the cytoplasm. Its activity is regulated as follows. The formation of the proteasomal ATPase PAN-20S proteasome complex, via the docking of the C-termini of PAN into the intersubunit pockets in the alpha-rings, triggers opening of the gate for substrate entry. Interconversion between the open-gate and close-gate conformations leads to a dynamic regulation of the 20S proteasome proteolysis activity. Functionally, component of the proteasome core, a large protease complex with broad specificity involved in protein degradation. This Saccharolobus solfataricus (strain ATCC 35092 / DSM 1617 / JCM 11322 / P2) (Sulfolobus solfataricus) protein is Proteasome subunit alpha.